Consider the following 209-residue polypeptide: Protein GET1 (209 aa).

The Lumenal segment spans residues 1–3 (MSL). The helical transmembrane segment at 4 to 23 (LLVIFLLELVVQLVNTIGAK) threads the bilayer. At 24–110 (TINNLLWRFY…SFSRKLTIYR (87 aa)) the chain is on the cytoplasmic side. A coiled-coil region spans residues 74-101 (WARLQRKHDKLMDELEKKKSQLDAHRTS). A helical transmembrane segment spans residues 111–131 (WILTRGMQWFLCFWFSSQPMF). At 132–155 (WLPYGWFPYWVEWLVSFPNAPMGS) the chain is on the lumenal side. Residues 156 to 172 (VSIVVWQSACSGVLALV) traverse the membrane as a helical segment. The Cytoplasmic portion of the chain corresponds to 173 to 209 (IEAVMAVVRYTGGTGMQKQRQPVPAAGGAPGTSKKDL). Residues 188–209 (MQKQRQPVPAAGGAPGTSKKDL) form a disordered region.

This sequence belongs to the WRB/GET1 family. Interacts with GET3.

The protein resides in the endoplasmic reticulum membrane. Required for the post-translational delivery of tail-anchored (TA) proteins to the endoplasmic reticulum. Acts as a membrane receptor for soluble GET3, which recognizes and selectively binds the transmembrane domain of TA proteins in the cytosol. The sequence is that of Protein GET1 from Chaetomium thermophilum (strain DSM 1495 / CBS 144.50 / IMI 039719) (Thermochaetoides thermophila).